The chain runs to 421 residues: Imidazolonepropionase (421 aa).

Positions 81 and 83 each coordinate Fe(3+). His-81 and His-83 together coordinate Zn(2+). Residues Arg-90, Tyr-153, and His-186 each coordinate 4-imidazolone-5-propanoate. N-formimidoyl-L-glutamate is bound at residue Tyr-153. A Fe(3+)-binding site is contributed by His-251. His-251 is a Zn(2+) binding site. Residue Glu-254 participates in 4-imidazolone-5-propanoate binding. Asp-326 provides a ligand contact to Fe(3+). A Zn(2+)-binding site is contributed by Asp-326. Residues Asn-328 and Gly-330 each contribute to the N-formimidoyl-L-glutamate site. Residue Ser-331 participates in 4-imidazolone-5-propanoate binding.

Belongs to the metallo-dependent hydrolases superfamily. HutI family. Zn(2+) serves as cofactor. Requires Fe(3+) as cofactor.

The protein resides in the cytoplasm. The enzyme catalyses 4-imidazolone-5-propanoate + H2O = N-formimidoyl-L-glutamate. Its pathway is amino-acid degradation; L-histidine degradation into L-glutamate; N-formimidoyl-L-glutamate from L-histidine: step 3/3. Catalyzes the hydrolytic cleavage of the carbon-nitrogen bond in imidazolone-5-propanoate to yield N-formimidoyl-L-glutamate. It is the third step in the universal histidine degradation pathway. The sequence is that of Imidazolonepropionase from Streptococcus pyogenes serotype M3 (strain SSI-1).